The following is a 113-amino-acid chain: Transcriptional regulator RamA (113 aa).

Residues 9-107 enclose the HTH araC/xylS-type domain; that stretch reads DTIVEWIDDN…NQPPGAYRKE (99 aa). DNA-binding regions (H-T-H motif) lie at residues 26-47 and 74-97; these read DDIA…LQYK and VYDI…TRTF.

In terms of assembly, monomer. Interacts with the C-terminus of RNAP subunit RpoA when part of class I or class II promoter complexes. Also interacts with sigma-70/RpoD in class II promoter complexes.

Transcriptional regulator. Binds to regulatory regions of target genes, including its own gene, efflux pump operon acrAB, antisense RNA gene micF, and various genes involved in lipid A biosynthesis, including lpxO and lpxL-2. Regulates expression of many genes, perhaps including its own; activates various lipid A biosynthetic genes, and as a result of activating acrAB, confers multidrug resistance. Plays a role in virulence and survival in host cells. This chain is Transcriptional regulator RamA, found in Klebsiella pneumoniae subsp. pneumoniae (strain HS11286).